The following is a 340-amino-acid chain: Ferrochelatase (340 aa).

2 residues coordinate Fe cation: His-189 and Glu-292.

The protein belongs to the ferrochelatase family.

It is found in the cytoplasm. The catalysed reaction is heme b + 2 H(+) = protoporphyrin IX + Fe(2+). Its pathway is porphyrin-containing compound metabolism; protoheme biosynthesis; protoheme from protoporphyrin-IX: step 1/1. Its function is as follows. Catalyzes the ferrous insertion into protoporphyrin IX. The polypeptide is Ferrochelatase (Pseudomonas savastanoi pv. phaseolicola (strain 1448A / Race 6) (Pseudomonas syringae pv. phaseolicola (strain 1448A / Race 6))).